The following is a 437-amino-acid chain: MQVKRFFAADMRQAMKLVRDELGADAAIIGNRRIAGGVELTAALDYKLSALAPRVPNAELEEELRKTHTRIATAQAELDHRQDSSDNNRQLFAGQSLTAAEPLIEPHVDAPEAAAAPAPAAAPVDPRLFDAMRSELSGLRELLEVQLGSLAWSQLQGSKPQQANLWRRLQRIGLSGPIARELLDLTAEIEEPRQAWRMLLAHLARMIDIPEIEPIEEGGVIAMVGPAGMGKTTTLAKLAARYVLKYGAQNLALVSMDSFRIGAQEQLKTLGRILNVPVTYVDPGQSLAAALEPLLRKRVVLIDTAGLQASDPALRMQLETLAGRGIAAKNYLVLATTSQKQVLTAAYHSYKRCGLAGCILTKLDETASLGDVLSLAISHELPVAYLTDGPRIPDDLHLPRGHQLVSRAVNVQQQDEPSEEAMADMFADLYHNPRRAG.

GTP-binding positions include 225–232 (GPAGMGKT), 303–307 (DTAGL), and 361–364 (TKLD).

It belongs to the GTP-binding SRP family.

Its subcellular location is the cell membrane. In terms of biological role, necessary for flagellar biosynthesis. May be involved in translocation of the flagellum. This chain is Flagellar biosynthesis protein FlhF (flhF), found in Pseudomonas putida (Arthrobacter siderocapsulatus).